Consider the following 756-residue polypeptide: Deoxynucleotidyltransferase terminal-interacting protein 2 (756 aa).

The segment at 1–99 (MVVTRSARAK…AESNYSVSEH (99 aa)) is disordered. Residues 9-21 (AKASIQAASAESS) are compositionally biased toward low complexity. Ser21 is subject to Phosphoserine. Composition is skewed to polar residues over residues 35–55 (PESS…TGKQ) and 80–96 (EPST…NYSV). Ser117 is subject to Phosphoserine. At Thr129 the chain carries Phosphothreonine. Residues Ser141, Ser145, Ser148, Ser184, and Ser194 each carry the phosphoserine modification. Residues 156–261 (PTEKTTGARR…LSEINKPNFY (106 aa)) form a disordered region. The span at 201-211 (RRTRSMQRKLK) shows a compositional bias: basic residues. Residues Lys217 and Lys220 each participate in a glycyl lysine isopeptide (Lys-Gly) (interchain with G-Cter in SUMO2) cross-link. Thr232 carries the post-translational modification Phosphothreonine. 3 positions are modified to phosphoserine: Ser239, Ser251, and Ser253. The segment covering 242–256 (RQTSHLQARSLSEIN) has biased composition (polar residues). Residues Lys257, Lys316, and Lys321 each participate in a glycyl lysine isopeptide (Lys-Gly) (interchain with G-Cter in SUMO2) cross-link. A phosphoserine mark is found at Ser324 and Ser330. Lys345 is covalently cross-linked (Glycyl lysine isopeptide (Lys-Gly) (interchain with G-Cter in SUMO2)). At Ser381 the chain carries Phosphoserine. A Glycyl lysine isopeptide (Lys-Gly) (interchain with G-Cter in SUMO2) cross-link involves residue Lys384. Phosphoserine is present on residues Ser434 and Ser512. A coiled-coil region spans residues 505-542 (LEEEDKASEVAIEEEKEEEEDEKSEEDSSDHDENEDEF). The segment at 510 to 547 (KASEVAIEEEKEEEEDEKSEEDSSDHDENEDEFSDEED) is disordered. The segment at 548–605 (FLNSTKAKLLKLTSSSIDPGLSIKQLGGLYINFNADKLQSNKRTLTQIKEKKKNELLQ) is tdBR region; mediates interaction with DNTT. A Glycyl lysine isopeptide (Lys-Gly) (interchain with G-Cter in SUMO2) cross-link involves residue Lys558. The residue at position 569 (Ser569) is a Phosphoserine. Glycyl lysine isopeptide (Lys-Gly) (interchain with G-Cter in SUMO2) cross-links involve residues Lys584 and Lys606. Thr610 bears the Phosphothreonine mark. Residues Lys626, Lys649, Lys658, Lys686, and Lys731 each participate in a glycyl lysine isopeptide (Lys-Gly) (interchain with G-Cter in SUMO2) cross-link.

In terms of assembly, forms a ternary complex with DNTT and core histone; interaction with PCNA releases DNTT and H2A/H2B histones from this ternary complex. Interacts with ESR1, ESR2, PPARG and RXRA. Part of the small subunit (SSU) processome, composed of more than 70 proteins and the RNA chaperone small nucleolar RNA (snoRNA) U3. In terms of tissue distribution, widely expressed with higher levels in testis.

It is found in the nucleus. It localises to the nucleolus. Functionally, regulates the transcriptional activity of DNTT and ESR1. May function as a chromatin remodeling protein. Part of the small subunit (SSU) processome, first precursor of the small eukaryotic ribosomal subunit. During the assembly of the SSU processome in the nucleolus, many ribosome biogenesis factors, an RNA chaperone and ribosomal proteins associate with the nascent pre-rRNA and work in concert to generate RNA folding, modifications, rearrangements and cleavage as well as targeted degradation of pre-ribosomal RNA by the RNA exosome. This is Deoxynucleotidyltransferase terminal-interacting protein 2 from Homo sapiens (Human).